Reading from the N-terminus, the 198-residue chain is Protein hunchback (198 aa).

2 disordered regions span residues 16-117 and 152-198; these read SHHH…PMQS and NDKL…KYMA. Residues 17–31 are compositionally biased toward basic residues; it reads HHHHHHHAHHSHHQH. 2 stretches are compositionally biased toward low complexity: residues 35-46 and 68-83; these read SNSNSNASSPHQ and QQQQQQQQQQQQQQQQ. Over residues 95–105 the composition is skewed to polar residues; the sequence is PSPSNNDQNSP. Residues 179-198 are compositionally biased toward basic and acidic residues; it reads EPEKEHDLMSNSSEDMKYMA.

Belongs to the hunchback C2H2-type zinc-finger protein family.

The protein resides in the nucleus. In terms of biological role, gap class segmentation protein that controls development of head structures. In Drosophila disjuncta (Fruit fly), this protein is Protein hunchback (hb).